We begin with the raw amino-acid sequence, 139 residues long: Inactive palmitoleoyl-protein carboxylesterase notum1b (139 aa).

It belongs to the pectinacetylesterase family. Notum subfamily.

Probable inactive palmitoleoyl-protein carboxylesterase. The protein is Inactive palmitoleoyl-protein carboxylesterase notum1b of Danio rerio (Zebrafish).